A 404-amino-acid chain; its full sequence is Subtilisin-like proteinase Mp1 (404 aa).

Positions 1–19 are cleaved as a signal peptide; it reads MVGFKTLALHLAAVLPALA. The propeptide occupies 20 to 112; that stretch reads APVDKQATQV…VEPDQVWDLY (93 aa). Positions 33–111 constitute an Inhibitor I9 domain; sequence SYIITLKQGA…FVEPDQVWDL (79 aa). Residues 121-404 enclose the Peptidase S8 domain; sequence PWGLGSISHR…NLIAFNGVTA (284 aa). The N-linked (GlcNAc...) asparagine glycan is linked to Asn-133. Catalysis depends on charge relay system residues Asp-154, His-186, and Ser-347.

Belongs to the peptidase S8 family.

It localises to the secreted. In Magnaporthiopsis poae (Kentucky bluegrass fungus), this protein is Subtilisin-like proteinase Mp1.